Consider the following 392-residue polypeptide: Protein DJ-1 homolog A (392 aa).

2 PfpI endopeptidase domains span residues 6–174 and 212–378; these read KTVL…EQLF and PQIL…EKFY.

It belongs to the peptidase C56 family. Homodimer. Interacts with CSD1 and GPX2.

Its subcellular location is the cytoplasm. The protein localises to the cytosol. It is found in the nucleus. Involved in oxidative stress response. Confers protection against diverse stresses by binding both CSD1 and GPX2 and mediating the cytosolic activation of the Cu-Zn-dependent superoxide dismutase activity of CSD1. This Arabidopsis thaliana (Mouse-ear cress) protein is Protein DJ-1 homolog A (DJ1A).